We begin with the raw amino-acid sequence, 143 residues long: Sarcoplasmic/endoplasmic reticulum calcium ATPase (143 aa).

This sequence belongs to the cation transport ATPase (P-type) (TC 3.A.3) family. Type IIA subfamily.

The protein localises to the endoplasmic reticulum membrane. The protein resides in the sarcoplasmic reticulum membrane. It catalyses the reaction Ca(2+)(in) + ATP + H2O = Ca(2+)(out) + ADP + phosphate + H(+). Functionally, this magnesium-dependent enzyme catalyzes the hydrolysis of ATP coupled with the transport of calcium. Transports calcium ions from the cytosol into the sarcoplasmic/endoplasmic reticulum lumen. Contributes to calcium sequestration involved in muscular excitation/contraction. This chain is Sarcoplasmic/endoplasmic reticulum calcium ATPase, found in Chionoecetes opilio (Atlantic snow crab).